We begin with the raw amino-acid sequence, 1174 residues long: RecBCD enzyme subunit RecB (1174 aa).

Residues 1-852 (MKIDSLKEKL…GGKTMNYEGL (852 aa)) form a DNA-binding and helicase activity, interacts with RecC region. In terms of domain architecture, UvrD-like helicase ATP-binding spans 4–449 (DSLKEKLNIF…YYLDTNWRSS (446 aa)). 25 to 32 (ASAGTGKT) contributes to the ATP binding site. Positions 479 to 745 (PSSKNLKMNF…KIITIHKSKG (267 aa)) constitute a UvrD-like helicase C-terminal domain. Residues 900–1174 (TWSITSFSQL…LIKKTMTLIS (275 aa)) form a nuclease activity, interacts with RecD and RecA region. 3 residues coordinate Mg(2+): histidine 957, aspartate 1068, and aspartate 1081. Residue aspartate 1081 is the For nuclease activity of the active site.

It belongs to the helicase family. UvrD subfamily. As to quaternary structure, heterotrimer of RecB, RecC and RecD. All subunits contribute to DNA-binding. Interacts with RecA. It depends on Mg(2+) as a cofactor.

The catalysed reaction is Exonucleolytic cleavage (in the presence of ATP) in either 5'- to 3'- or 3'- to 5'-direction to yield 5'-phosphooligonucleotides.. It catalyses the reaction Couples ATP hydrolysis with the unwinding of duplex DNA by translocating in the 3'-5' direction.. It carries out the reaction ATP + H2O = ADP + phosphate + H(+). Functionally, a helicase/nuclease that prepares dsDNA breaks (DSB) for recombinational DNA repair. Binds to DSBs and unwinds DNA via a highly rapid and processive ATP-dependent bidirectional helicase activity. Unwinds dsDNA until it encounters a Chi (crossover hotspot instigator) sequence from the 3' direction. Cuts ssDNA a few nucleotides 3' to the Chi site. The properties and activities of the enzyme are changed at Chi. The Chi-altered holoenzyme produces a long 3'-ssDNA overhang and facilitates RecA-binding to the ssDNA for homologous DNA recombination and repair. Holoenzyme degrades any linearized DNA that is unable to undergo homologous recombination. In the holoenzyme this subunit contributes ATPase, 3'-5' helicase, exonuclease activity and loads RecA onto ssDNA. The sequence is that of RecBCD enzyme subunit RecB from Buchnera aphidicola subsp. Acyrthosiphon pisum (strain APS) (Acyrthosiphon pisum symbiotic bacterium).